The sequence spans 272 residues: NH(3)-dependent NAD(+) synthetase (272 aa).

45-52 serves as a coordination point for ATP; it reads GISGGQDS. Mg(2+) is bound at residue Asp51. Residue Arg138 coordinates deamido-NAD(+). Position 158 (Thr158) interacts with ATP. Glu163 lines the Mg(2+) pocket. Deamido-NAD(+) is bound by residues Lys171 and Asp178. ATP-binding residues include Lys187 and Thr209. 258 to 259 provides a ligand contact to deamido-NAD(+); it reads HK.

The protein belongs to the NAD synthetase family. In terms of assembly, homodimer.

It catalyses the reaction deamido-NAD(+) + NH4(+) + ATP = AMP + diphosphate + NAD(+) + H(+). Its pathway is cofactor biosynthesis; NAD(+) biosynthesis; NAD(+) from deamido-NAD(+) (ammonia route): step 1/1. Its function is as follows. Catalyzes the ATP-dependent amidation of deamido-NAD to form NAD. Uses ammonia as a nitrogen source. This is NH(3)-dependent NAD(+) synthetase from Bacillus cereus (strain 03BB102).